The sequence spans 260 residues: Membrane protein insertase YidC 1 (260 aa).

Residues Met-1–Gly-22 form the signal peptide. A lipid anchor (N-palmitoyl cysteine) is attached at Cys-23. The S-diacylglycerol cysteine moiety is linked to residue Cys-23. Helical transmembrane passes span Ile-29–Ile-49, Val-52–Ile-72, Leu-133–Ile-153, Phe-164–Leu-184, and Met-213–Ile-233.

It belongs to the OXA1/ALB3/YidC family. Type 2 subfamily.

The protein localises to the cell membrane. Required for the insertion and/or proper folding and/or complex formation of integral membrane proteins into the membrane. Involved in integration of membrane proteins that insert both dependently and independently of the Sec translocase complex, as well as at least some lipoproteins. The sequence is that of Membrane protein insertase YidC 1 from Bacillus cereus (strain ATCC 14579 / DSM 31 / CCUG 7414 / JCM 2152 / NBRC 15305 / NCIMB 9373 / NCTC 2599 / NRRL B-3711).